Consider the following 253-residue polypeptide: Triosephosphate isomerase, cytosolic (253 aa).

2 residues coordinate substrate: Asn10 and Lys12. Residue His96 is the Electrophile of the active site. The active-site Proton acceptor is the Glu166.

It belongs to the triosephosphate isomerase family. As to quaternary structure, homodimer. In terms of tissue distribution, starchy endosperm.

The protein resides in the cytoplasm. It carries out the reaction D-glyceraldehyde 3-phosphate = dihydroxyacetone phosphate. The protein operates within carbohydrate biosynthesis; gluconeogenesis. It functions in the pathway carbohydrate degradation; glycolysis; D-glyceraldehyde 3-phosphate from glycerone phosphate: step 1/1. This chain is Triosephosphate isomerase, cytosolic, found in Hordeum vulgare (Barley).